The sequence spans 341 residues: B3 domain-containing transcription factor VRN1 (341 aa).

Residues 5–98 (FFHKLIFSST…AFSVYIFNLS (94 aa)) constitute a DNA-binding region (TF-B3 1). The interval 166-223 (GPVKAEEPTPTPKIPKKRGRKKKNADPEEINSSAPRDDDPENRSKFYESASARKRTVT) is disordered. Basic residues predominate over residues 179–188 (IPKKRGRKKK). Positions 200-211 (PRDDDPENRSKF) are enriched in basic and acidic residues. A DNA-binding region (TF-B3 2) is located at residues 244–338 (FRVVLRPSYL…VLKVTAFRVN (95 aa)).

Expressed in roots and at lower levels in aerial parts.

It is found in the nucleus. Its function is as follows. Essential protein. Involved in the regulation of vernalization. Acts as a transcriptional repressor of FLC, a major target of the vernalization pathway. Binds DNA in vitro in a non-sequence-specific manner. In Arabidopsis thaliana (Mouse-ear cress), this protein is B3 domain-containing transcription factor VRN1.